The chain runs to 238 residues: MRTLFVGDLHLSADRPDITQAFLEFLDTQLHDTDALYILGDLFEVWVGDDIAEPFVNQLVDAIKHASEKLPVYFIHGNRDFLIGEAFAKRCGMTLLPEVYSLDLYGVSTVILHGDSLCTLDKSYQRFRAFRNQGWAKWLYAHLPKSKRLGIAAKLRAKSQSSNQQKSYTIMDVEPDAVMDLLDATQTQQMIHGHTHRPDIHQLAHGKRRIVVGDWYEQGSMLSVSQDGVELIELPFGK.

Aspartate 8, histidine 10, aspartate 41, asparagine 78, and histidine 113 together coordinate Mn(2+). 78-79 (NR) contacts substrate. Residues aspartate 121, serine 159, asparagine 163, lysine 166, and histidine 194 each contribute to the substrate site. Mn(2+)-binding residues include histidine 194 and histidine 196.

This sequence belongs to the LpxH family. The cofactor is Mn(2+).

Its subcellular location is the cell inner membrane. The catalysed reaction is UDP-2-N,3-O-bis[(3R)-3-hydroxytetradecanoyl]-alpha-D-glucosamine + H2O = 2-N,3-O-bis[(3R)-3-hydroxytetradecanoyl]-alpha-D-glucosaminyl 1-phosphate + UMP + 2 H(+). It functions in the pathway glycolipid biosynthesis; lipid IV(A) biosynthesis; lipid IV(A) from (3R)-3-hydroxytetradecanoyl-[acyl-carrier-protein] and UDP-N-acetyl-alpha-D-glucosamine: step 4/6. In terms of biological role, hydrolyzes the pyrophosphate bond of UDP-2,3-diacylglucosamine to yield 2,3-diacylglucosamine 1-phosphate (lipid X) and UMP by catalyzing the attack of water at the alpha-P atom. Involved in the biosynthesis of lipid A, a phosphorylated glycolipid that anchors the lipopolysaccharide to the outer membrane of the cell. In Shewanella pealeana (strain ATCC 700345 / ANG-SQ1), this protein is UDP-2,3-diacylglucosamine hydrolase.